The sequence spans 270 residues: ES1 protein, mitochondrial (270 aa).

As to expression, expressed specifically in the inner segments of cone photoreceptor cells of the retina (at protein level).

It localises to the mitochondrion. Plays a role in promoting mitochondrial enlargement in cone photoreceptor cells in a fusion-independent and ATP-dependent manner. The chain is ES1 protein, mitochondrial from Danio rerio (Zebrafish).